An 83-amino-acid polypeptide reads, in one-letter code: Bowman-Birk type proteinase inhibitor C-II (83 aa).

Positions 1–7 (MELNLFK) are excised as a propeptide. 7 disulfide bridges follow: Cys-21–Cys-75, Cys-22–Cys-37, Cys-25–Cys-71, Cys-27–Cys-35, Cys-45–Cys-52, Cys-49–Cys-64, and Cys-54–Cys-62.

The protein belongs to the Bowman-Birk serine protease inhibitor family.

The chain is Bowman-Birk type proteinase inhibitor C-II from Glycine max (Soybean).